The following is a 619-amino-acid chain: Replication restart protein PriA (619 aa).

The Helicase ATP-binding domain occupies 119 to 285 (LKELQKHSAS…KDKALVRLKG (167 aa)). Position 132–139 (132–139 (GDTGSGKT)) interacts with ATP. Residues 228–231 (DEEH) carry the DEAH box motif. Positions 336, 339, 345, 348, 363, 366, 376, and 379 each coordinate Zn(2+). In terms of domain architecture, Helicase C-terminal spans 371–532 (PIPKICSACQ…ELYPPFSRLC (162 aa)).

It belongs to the helicase family. PriA subfamily. In terms of assembly, component of the replication restart primosome. It depends on Zn(2+) as a cofactor.

It catalyses the reaction Couples ATP hydrolysis with the unwinding of duplex DNA by translocating in the 3'-5' direction.. It carries out the reaction ATP + H2O = ADP + phosphate + H(+). Functionally, initiates the restart of stalled replication forks, which reloads the replicative helicase on sites other than the origin of replication. Recognizes and binds to abandoned replication forks and remodels them to uncover a helicase loading site. Promotes assembly of the primosome at these replication forks. In terms of biological role, important for survival of the bacteria in host cells. The sequence is that of Replication restart protein PriA from Helicobacter pylori (strain ATCC 700392 / 26695) (Campylobacter pylori).